The chain runs to 199 residues: V-type proton ATPase subunit E (199 aa).

It belongs to the V-ATPase E subunit family.

In terms of biological role, produces ATP from ADP in the presence of a proton gradient across the membrane. In Clostridium botulinum (strain 657 / Type Ba4), this protein is V-type proton ATPase subunit E.